A 193-amino-acid polypeptide reads, in one-letter code: Molybdenum cofactor guanylyltransferase (193 aa).

GTP-binding positions include 8-10 (LAG), Lys21, Asp67, and Asp98. Asp98 is a binding site for Mg(2+).

The protein belongs to the MobA family. Monomer. It depends on Mg(2+) as a cofactor.

Its subcellular location is the cytoplasm. It carries out the reaction Mo-molybdopterin + GTP + H(+) = Mo-molybdopterin guanine dinucleotide + diphosphate. Its function is as follows. Transfers a GMP moiety from GTP to Mo-molybdopterin (Mo-MPT) cofactor (Moco or molybdenum cofactor) to form Mo-molybdopterin guanine dinucleotide (Mo-MGD) cofactor. This is Molybdenum cofactor guanylyltransferase from Cereibacter sphaeroides (strain ATCC 17029 / ATH 2.4.9) (Rhodobacter sphaeroides).